The primary structure comprises 88 residues: MAGTVASPEGITNPPIDDLLTAADSKYALVIYAAKRARQINAYYSQLGEGLLEYVGPLVETHVQEKALSVAMREINEGLLTSEPIEQQ.

The protein belongs to the RNA polymerase subunit omega family. The RNAP catalytic core consists of 2 alpha, 1 beta, 1 beta' and 1 omega subunit. When a sigma factor is associated with the core the holoenzyme is formed, which can initiate transcription.

The enzyme catalyses RNA(n) + a ribonucleoside 5'-triphosphate = RNA(n+1) + diphosphate. Functionally, promotes RNA polymerase assembly. Latches the N- and C-terminal regions of the beta' subunit thereby facilitating its interaction with the beta and alpha subunits. This is DNA-directed RNA polymerase subunit omega from Kineococcus radiotolerans (strain ATCC BAA-149 / DSM 14245 / SRS30216).